The following is a 307-amino-acid chain: ADP,ATP carrier protein 3 (307 aa).

Solcar repeat units lie at residues 10-103 (TNFA…IKLM), 114-206 (KWFA…LKPL), and 214-300 (GSFL…LQMI). 5 consecutive transmembrane segments (helical) span residues 12–39 (FAIN…VKIL), 80–104 (TANV…KLMF), 112–132 (YGKW…LSLL), 182–203 (FMPS…FDSL), and 217–237 (LASF…SYPL). Residues Arg85 and Lys97 each coordinate ADP. Arg241 provides a ligand contact to ADP. An important for transport activity region spans residues 241–246 (RRRMMM). Residues 241-246 (RRRMMM) carry the Nucleotide carrier signature motif motif. Residues 277–297 (CGANILRSVAGAGVISMYDQL) traverse the membrane as a helical segment.

Belongs to the mitochondrial carrier (TC 2.A.29) family. Monomer.

Its subcellular location is the mitochondrion inner membrane. It catalyses the reaction ADP(in) + ATP(out) = ADP(out) + ATP(in). The matrix-open state (m-state) is inhibited by the membrane-permeable bongkrekic acid (BKA). The cytoplasmic-open state (c-state) is inhibited by the membrane-impermeable toxic inhibitor carboxyatractyloside (CATR). ADP:ATP antiporter that mediates import of ADP into the mitochondrial matrix for ATP synthesis, and export of ATP out to fuel the cell. Cycles between the cytoplasmic-open state (c-state) and the matrix-open state (m-state): operates by the alternating access mechanism with a single substrate-binding site intermittently exposed to either the cytosolic (c-state) or matrix (m-state) side of the inner mitochondrial membrane. The protein is ADP,ATP carrier protein 3 (AAC3) of Saccharomyces cerevisiae (strain ATCC 204508 / S288c) (Baker's yeast).